A 142-amino-acid chain; its full sequence is MFAVIKTGGKQYRVAANDLIKVEKVAGEAGDIVEFAEVLMVGSTIGAPTVAGSLVTAEVVEQGRGRKVIAFKKRRRQNSKRTRGHRQELTTIRISEILTDGAKPSKKAAEKKAPKADAAEGEAAKPKKAAPKKAATKAESAE.

Residues 74 to 84 are compositionally biased toward basic residues; that stretch reads RRRQNSKRTRG. A disordered region spans residues 74-142; the sequence is RRRQNSKRTR…KAATKAESAE (69 aa). A compositionally biased stretch (basic and acidic residues) spans 107-125; it reads KAAEKKAPKADAAEGEAAK. Positions 126–135 are enriched in basic residues; sequence PKKAAPKKAA.

Belongs to the bacterial ribosomal protein bL21 family. Part of the 50S ribosomal subunit. Contacts protein L20.

In terms of biological role, this protein binds to 23S rRNA in the presence of protein L20. The chain is Large ribosomal subunit protein bL21 from Brucella abortus (strain S19).